The following is a 370-amino-acid chain: 3-isopropylmalate dehydrogenase (370 aa).

An NAD(+)-binding site is contributed by Gly77 to Glu90. 4 residues coordinate substrate: Arg97, Arg107, Arg135, and Asp226. Asp226, Asp250, and Asp254 together coordinate Mg(2+). Position 290–302 (Gly290–Asn302) interacts with NAD(+).

Belongs to the isocitrate and isopropylmalate dehydrogenases family. LeuB type 1 subfamily. As to quaternary structure, homodimer. It depends on Mg(2+) as a cofactor. The cofactor is Mn(2+).

It is found in the cytoplasm. The catalysed reaction is (2R,3S)-3-isopropylmalate + NAD(+) = 4-methyl-2-oxopentanoate + CO2 + NADH. It participates in amino-acid biosynthesis; L-leucine biosynthesis; L-leucine from 3-methyl-2-oxobutanoate: step 3/4. In terms of biological role, catalyzes the oxidation of 3-carboxy-2-hydroxy-4-methylpentanoate (3-isopropylmalate) to 3-carboxy-4-methyl-2-oxopentanoate. The product decarboxylates to 4-methyl-2 oxopentanoate. The chain is 3-isopropylmalate dehydrogenase from Rhizobium johnstonii (strain DSM 114642 / LMG 32736 / 3841) (Rhizobium leguminosarum bv. viciae).